A 362-amino-acid chain; its full sequence is Cobalt-precorrin-5B C(1)-methyltransferase (362 aa).

It belongs to the CbiD family.

The enzyme catalyses Co-precorrin-5B + S-adenosyl-L-methionine = Co-precorrin-6A + S-adenosyl-L-homocysteine. Its pathway is cofactor biosynthesis; adenosylcobalamin biosynthesis; cob(II)yrinate a,c-diamide from sirohydrochlorin (anaerobic route): step 6/10. Catalyzes the methylation of C-1 in cobalt-precorrin-5B to form cobalt-precorrin-6A. The sequence is that of Cobalt-precorrin-5B C(1)-methyltransferase from Methanocaldococcus jannaschii (strain ATCC 43067 / DSM 2661 / JAL-1 / JCM 10045 / NBRC 100440) (Methanococcus jannaschii).